A 490-amino-acid polypeptide reads, in one-letter code: Chromosomal replication initiator protein DnaA (490 aa).

The tract at residues 1–75 is domain I, interacts with DnaA modulators; the sequence is MAVSSDAEQK…SELWKQEDAD (75 aa). The interval 75 to 145 is domain II; sequence DLLKIEIVVR…SEFRHNVLGS (71 aa). Residues 146–368 form a domain III, AAA+ region region; that stretch reads PLDPRYTFGS…GAFNQLLFRQ (223 aa). Positions 192, 194, 195, and 196 each coordinate ATP. Positions 369–490 are domain IV, binds dsDNA; sequence SFEPQITIDR…LLRRLINDQA (122 aa).

It belongs to the DnaA family. In terms of assembly, oligomerizes as a right-handed, spiral filament on DNA at oriC.

The protein resides in the cytoplasm. Functionally, plays an essential role in the initiation and regulation of chromosomal replication. ATP-DnaA binds to the origin of replication (oriC) to initiate formation of the DNA replication initiation complex once per cell cycle. Binds the DnaA box (a 9 base pair repeat at the origin) and separates the double-stranded (ds)DNA. Forms a right-handed helical filament on oriC DNA; dsDNA binds to the exterior of the filament while single-stranded (ss)DNA is stabiized in the filament's interior. The ATP-DnaA-oriC complex binds and stabilizes one strand of the AT-rich DNA unwinding element (DUE), permitting loading of DNA polymerase. After initiation quickly degrades to an ADP-DnaA complex that is not apt for DNA replication. Binds acidic phospholipids. The sequence is that of Chromosomal replication initiator protein DnaA from Mesorhizobium japonicum (strain LMG 29417 / CECT 9101 / MAFF 303099) (Mesorhizobium loti (strain MAFF 303099)).